The chain runs to 159 residues: NADH-quinone oxidoreductase subunit B (159 aa).

[4Fe-4S] cluster-binding residues include C32, C33, C97, and C126.

This sequence belongs to the complex I 20 kDa subunit family. As to quaternary structure, NDH-1 is composed of 14 different subunits. Subunits NuoB, C, D, E, F, and G constitute the peripheral sector of the complex. It depends on [4Fe-4S] cluster as a cofactor.

The protein localises to the cell inner membrane. It catalyses the reaction a quinone + NADH + 5 H(+)(in) = a quinol + NAD(+) + 4 H(+)(out). In terms of biological role, NDH-1 shuttles electrons from NADH, via FMN and iron-sulfur (Fe-S) centers, to quinones in the respiratory chain. The immediate electron acceptor for the enzyme in this species is believed to be ubiquinone. Couples the redox reaction to proton translocation (for every two electrons transferred, four hydrogen ions are translocated across the cytoplasmic membrane), and thus conserves the redox energy in a proton gradient. The polypeptide is NADH-quinone oxidoreductase subunit B (Helicobacter pylori (strain HPAG1)).